The primary structure comprises 426 residues: Histidine--tRNA ligase (426 aa).

This sequence belongs to the class-II aminoacyl-tRNA synthetase family. As to quaternary structure, homodimer.

The protein resides in the cytoplasm. The catalysed reaction is tRNA(His) + L-histidine + ATP = L-histidyl-tRNA(His) + AMP + diphosphate + H(+). The polypeptide is Histidine--tRNA ligase (Streptococcus sanguinis (strain SK36)).